A 201-amino-acid polypeptide reads, in one-letter code: Histidinol dehydrogenase (201 aa).

The protein belongs to the histidinol dehydrogenase family. In terms of assembly, homodimer. The cofactor is Zn(2+).

It catalyses the reaction L-histidinol + 2 NAD(+) + H2O = L-histidine + 2 NADH + 3 H(+). It functions in the pathway amino-acid biosynthesis; L-histidine biosynthesis; L-histidine from 5-phospho-alpha-D-ribose 1-diphosphate: step 9/9. Functionally, catalyzes the sequential NAD-dependent oxidations of L-histidinol to L-histidinaldehyde and then to L-histidine. The chain is Histidinol dehydrogenase (hisD) from Buchnera aphidicola subsp. Diuraphis noxia.